We begin with the raw amino-acid sequence, 573 residues long: N(2)-(2-carboxyethyl)arginine synthase (573 aa).

Substrate is bound by residues Tyr-271 and Asp-301. Position 410–413 (410–413 (IGFF)) interacts with thiamine diphosphate. Residue 414–415 (RH) participates in substrate binding. 436 to 438 (SSF) lines the thiamine diphosphate pocket. Asp-463 contacts Mg(2+). Thiamine diphosphate-binding positions include 464-465 (GG), 490-495 (NDTNGL), and Tyr-561. 2 residues coordinate Mg(2+): Asn-490 and Thr-492. Position 571 (Leu-571) interacts with substrate.

Homotetramer; dimer of dimers. Mg(2+) is required as a cofactor. It depends on thiamine diphosphate as a cofactor.

It carries out the reaction D-glyceraldehyde 3-phosphate + L-arginine = N(2)-(2-carboxyethyl)-L-arginine + phosphate + H(+). Involved in the biosynthesis of the beta-lactamase inhibitor, clavulanic acid. Catalyzes the thiamine diphosphate (ThDP) dependent condensation of D-glyceraldehyde-3-phosphate (D-G3P) with L-arginine to yield the beta-amino acid, N2-(2-carboxyethyl)arginine (CEA) via a beta-elimination resulting in the formation of an enol which undergoes a second elimination to generate the alpha,beta-unsaturated acryloyl-ThDP. This Streptomyces clavuligerus protein is N(2)-(2-carboxyethyl)arginine synthase.